The following is a 258-amino-acid chain: Acetylglutamate kinase (258 aa).

Residues 41–42 (GG), Arg63, and Asn156 contribute to the substrate site.

This sequence belongs to the acetylglutamate kinase family. ArgB subfamily. As to quaternary structure, homodimer.

The protein resides in the cytoplasm. The catalysed reaction is N-acetyl-L-glutamate + ATP = N-acetyl-L-glutamyl 5-phosphate + ADP. It functions in the pathway amino-acid biosynthesis; L-arginine biosynthesis; N(2)-acetyl-L-ornithine from L-glutamate: step 2/4. Its function is as follows. Catalyzes the ATP-dependent phosphorylation of N-acetyl-L-glutamate. This is Acetylglutamate kinase from Geobacillus stearothermophilus (Bacillus stearothermophilus).